Here is a 460-residue protein sequence, read N- to C-terminus: Probable asparagine--tRNA ligase, mitochondrial (460 aa).

The protein belongs to the class-II aminoacyl-tRNA synthetase family.

It localises to the mitochondrion matrix. The enzyme catalyses tRNA(Asn) + L-asparagine + ATP = L-asparaginyl-tRNA(Asn) + AMP + diphosphate + H(+). The protein is Probable asparagine--tRNA ligase, mitochondrial (asnS2) of Dictyostelium discoideum (Social amoeba).